A 395-amino-acid chain; its full sequence is Nicotinate phosphoribosyltransferase (395 aa).

His222 is subject to Phosphohistidine; by autocatalysis.

The protein belongs to the NAPRTase family. Post-translationally, transiently phosphorylated on a His residue during the reaction cycle. Phosphorylation strongly increases the affinity for substrates and increases the rate of nicotinate D-ribonucleotide production. Dephosphorylation regenerates the low-affinity form of the enzyme, leading to product release.

The catalysed reaction is nicotinate + 5-phospho-alpha-D-ribose 1-diphosphate + ATP + H2O = nicotinate beta-D-ribonucleotide + ADP + phosphate + diphosphate. It participates in cofactor biosynthesis; NAD(+) biosynthesis; nicotinate D-ribonucleotide from nicotinate: step 1/1. In terms of biological role, catalyzes the synthesis of beta-nicotinate D-ribonucleotide from nicotinate and 5-phospho-D-ribose 1-phosphate at the expense of ATP. This chain is Nicotinate phosphoribosyltransferase, found in Polaromonas sp. (strain JS666 / ATCC BAA-500).